The chain runs to 116 residues: Vesicle-associated membrane protein 2 (116 aa).

Residues 1–28 (MSATAATVPPAAPAGEGGPPAPPPNLTS) form a disordered region. N-acetylserine is present on Ser2. The Cytoplasmic portion of the chain corresponds to 2–94 (SATAATVPPA…KRKYWWKNLK (93 aa)). A v-SNARE coiled-coil homology domain is found at 31–91 (RLQQTQAQVD…AKLKRKYWWK (61 aa)). Residues 92–116 (NLKMMIILGVICAIILIIIIVYFST) are required for interaction with SEPT8. The helical; Anchor for type IV membrane protein transmembrane segment at 95 to 114 (MMIILGVICAIILIIIIVYF) threads the bilayer. The Vesicular portion of the chain corresponds to 115–116 (ST).

The protein belongs to the synaptobrevin family. Part of the SNARE core complex containing SNAP25, VAMP2 and STX1A; this complex constitutes the basic catalytic machinery of the complex neurotransmitter release apparatus. Recruited to the SNARE complex following binding of the SNARE complex component STX1A to STXBP1. This complex binds to CPLX1. Interacts with VAPA and VAPB. Interacts (via N-terminus) with KCNB1 (via N-terminus and C-terminus); stimulates the channel inactivation rate of KCNB1. Interacts with POPDC1 and STX4. Interacts with WDFY2, PRKCZ and PRKCI. Forms a complex with WDFY2 and PRKCZ. Interacts with SEPT8; the interaction inhibits interaction of VAMP2 with SYP. Interacts with SYP; the interaction is inhibited by interaction with SEPT8. Interacts with PICALM. Interacts with alpha-synuclein/SNCA. Interacts with STX3 isoform 3B. Phosphorylated by PRKCZ in vitro and this phosphorylation is increased in the presence of WDFY2. In terms of processing, (Microbial infection) Targeted and hydrolyzed by C.botulinum neurotoxin type B (BoNT/B, botB); 20 hours after treatment of spinal cord cells almost all the protein has been digested. BoNT/B hydrolyzes the 76-Gln-|-Phe-77 bond and inhibits neurotransmitter release. Post-translationally, (Microbial infection) Targeted and hydrolyzed by C.tetani toxin (tetX); 20 hours after treatment of spinal cord cells almost all the protein has been digested. Tetanus toxin hydrolyzes the 76-Gln-|-Phe-77 bond and inhibits neurotransmitter release. As to expression, expressed in the outer plexiform layer of the retina (at protein level).

The protein resides in the cytoplasmic vesicle. The protein localises to the secretory vesicle. Its subcellular location is the synaptic vesicle membrane. It is found in the cell membrane. Functionally, involved in the targeting and/or fusion of transport vesicles to their target membrane. Major SNARE protein of synaptic vesicles which mediates fusion of synaptic vesicles to release neurotransmitters. Essential for fast vesicular exocytosis and activity-dependent neurotransmitter release as well as fast endocytosis that mediates rapid reuse of synaptic vesicles. Modulates the gating characteristics of the delayed rectifier voltage-dependent potassium channel KCNB1. The protein is Vesicle-associated membrane protein 2 (Vamp2) of Mus musculus (Mouse).